Consider the following 80-residue polypeptide: SPbeta prophage-derived uncharacterized HTH-type transcriptional regulator YotL (80 aa).

Positions 12-67 constitute an HTH cro/C1-type domain; the sequence is LNELMHEYSVSIEDLVECTGLSKQRINDYVGGFKSNMNIGTAMTFADAIGCSIEEL. Positions 23–42 form a DNA-binding region, H-T-H motif; sequence IEDLVECTGLSKQRINDYVG.

The sequence is that of SPbeta prophage-derived uncharacterized HTH-type transcriptional regulator YotL (yotL) from Bacillus subtilis (strain 168).